The primary structure comprises 24 residues: Brevinin-1Pc (24 aa).

A disulfide bridge connects residues cysteine 18 and cysteine 24.

In terms of tissue distribution, expressed by the skin glands.

It is found in the secreted. Functionally, antibacterial activity against Gram-positive bacterium S.aureus and Gram-negative bacterium E.coli. Has activity against C.albicans. The chain is Brevinin-1Pc from Lithobates pipiens (Northern leopard frog).